The primary structure comprises 474 residues: GTPase Der (474 aa).

2 EngA-type G domains span residues 3–167 and 204–379; these read FTVA…GVDR and LRVA…MVWN. GTP-binding positions include 9 to 16, 56 to 60, 119 to 122, 210 to 217, 257 to 261, and 322 to 325; these read GRPNVGKS, DTAGL, NKSE, GRPNAGKS, DTAGM, and NKWD. Residues 380-464 enclose the KH-like domain; the sequence is KRISTAKLNR…PIRIHLKASE (85 aa).

Belongs to the TRAFAC class TrmE-Era-EngA-EngB-Septin-like GTPase superfamily. EngA (Der) GTPase family. Associates with the 50S ribosomal subunit.

GTPase that plays an essential role in the late steps of ribosome biogenesis. This is GTPase Der from Allorhizobium ampelinum (strain ATCC BAA-846 / DSM 112012 / S4) (Agrobacterium vitis (strain S4)).